A 266-amino-acid chain; its full sequence is GTP cyclohydrolase III (266 aa).

This sequence belongs to the archaeal-type GTP cyclohydrolase family.

The catalysed reaction is GTP + 3 H2O = 2-amino-5-formylamino-6-(5-phospho-D-ribosylamino)pyrimidin-4(3H)-one + 2 phosphate + 2 H(+). Functionally, catalyzes the formation of 2-amino-5-formylamino-6-ribofuranosylamino-4(3H)-pyrimidinone ribonucleotide monophosphate and inorganic phosphate from GTP. Also has an independent pyrophosphate phosphohydrolase activity. This Methanococcus maripaludis (strain C5 / ATCC BAA-1333) protein is GTP cyclohydrolase III.